Here is a 377-residue protein sequence, read N- to C-terminus: Anhydro-N-acetylmuramic acid kinase (377 aa).

Residue 18 to 25 (GTSADGID) participates in ATP binding.

The protein belongs to the anhydro-N-acetylmuramic acid kinase family.

The enzyme catalyses 1,6-anhydro-N-acetyl-beta-muramate + ATP + H2O = N-acetyl-D-muramate 6-phosphate + ADP + H(+). It functions in the pathway amino-sugar metabolism; 1,6-anhydro-N-acetylmuramate degradation. Its pathway is cell wall biogenesis; peptidoglycan recycling. Catalyzes the specific phosphorylation of 1,6-anhydro-N-acetylmuramic acid (anhMurNAc) with the simultaneous cleavage of the 1,6-anhydro ring, generating MurNAc-6-P. Is required for the utilization of anhMurNAc either imported from the medium or derived from its own cell wall murein, and thus plays a role in cell wall recycling. This Xanthomonas oryzae pv. oryzae (strain MAFF 311018) protein is Anhydro-N-acetylmuramic acid kinase.